The sequence spans 393 residues: Chalcone synthase G (393 aa).

The active site involves Cys164.

This sequence belongs to the thiolase-like superfamily. Chalcone/stilbene synthases family. In terms of tissue distribution, expressed in seedlings after illumination with UV light. No expression detectable in flowers. It is not known for sure whether CHSG encodes a chalcone synthase or a very closely related condensing enzyme.

It carries out the reaction (E)-4-coumaroyl-CoA + 3 malonyl-CoA + 3 H(+) = 2',4,4',6'-tetrahydroxychalcone + 3 CO2 + 4 CoA. Its pathway is secondary metabolite biosynthesis; flavonoid biosynthesis. In terms of biological role, the primary product of this enzyme is 4,2',4',6'-tetrahydroxychalcone (also termed naringenin-chalcone or chalcone) which can under specific conditions spontaneously isomerize into naringenin. The polypeptide is Chalcone synthase G (CHSG) (Petunia hybrida (Petunia)).